The primary structure comprises 187 residues: dCTP deaminase, dUMP-forming (187 aa).

Residues 101–106 (KSSLGR), Asp-119, 127–129 (TLE), Gln-148, Tyr-162, Lys-170, and Gln-174 contribute to the dCTP site. Glu-129 functions as the Proton donor/acceptor in the catalytic mechanism.

The protein belongs to the dCTP deaminase family. Homotrimer.

The catalysed reaction is dCTP + 2 H2O = dUMP + NH4(+) + diphosphate. The protein operates within pyrimidine metabolism; dUMP biosynthesis; dUMP from dCTP: step 1/1. Functionally, bifunctional enzyme that catalyzes both the deamination of dCTP to dUTP and the hydrolysis of dUTP to dUMP without releasing the toxic dUTP intermediate. The chain is dCTP deaminase, dUMP-forming from Corynebacterium diphtheriae (strain ATCC 700971 / NCTC 13129 / Biotype gravis).